The chain runs to 334 residues: Holliday junction branch migration complex subunit RuvB (334 aa).

A large ATPase domain (RuvB-L) region spans residues 1 to 182 (MDDRMVDQSM…FGVHLRLEYY (182 aa)). ATP contacts are provided by residues Leu21, Arg22, Gly63, Lys66, Thr67, Thr68, 129 to 131 (EDF), Arg172, Tyr182, and Arg219. Residue Thr67 participates in Mg(2+) binding. Positions 183–253 (QELELKEIIV…TTRASLQLLQ (71 aa)) are small ATPAse domain (RuvB-S). The tract at residues 256-334 (DEGLDYIDHK…HFSKKNGKKE (79 aa)) is head domain (RuvB-H). The DNA site is built by Arg292, Arg311, and Arg316.

It belongs to the RuvB family. As to quaternary structure, homohexamer. Forms an RuvA(8)-RuvB(12)-Holliday junction (HJ) complex. HJ DNA is sandwiched between 2 RuvA tetramers; dsDNA enters through RuvA and exits via RuvB. An RuvB hexamer assembles on each DNA strand where it exits the tetramer. Each RuvB hexamer is contacted by two RuvA subunits (via domain III) on 2 adjacent RuvB subunits; this complex drives branch migration. In the full resolvosome a probable DNA-RuvA(4)-RuvB(12)-RuvC(2) complex forms which resolves the HJ.

The protein resides in the cytoplasm. It carries out the reaction ATP + H2O = ADP + phosphate + H(+). In terms of biological role, the RuvA-RuvB-RuvC complex processes Holliday junction (HJ) DNA during genetic recombination and DNA repair, while the RuvA-RuvB complex plays an important role in the rescue of blocked DNA replication forks via replication fork reversal (RFR). RuvA specifically binds to HJ cruciform DNA, conferring on it an open structure. The RuvB hexamer acts as an ATP-dependent pump, pulling dsDNA into and through the RuvAB complex. RuvB forms 2 homohexamers on either side of HJ DNA bound by 1 or 2 RuvA tetramers; 4 subunits per hexamer contact DNA at a time. Coordinated motions by a converter formed by DNA-disengaged RuvB subunits stimulates ATP hydrolysis and nucleotide exchange. Immobilization of the converter enables RuvB to convert the ATP-contained energy into a lever motion, pulling 2 nucleotides of DNA out of the RuvA tetramer per ATP hydrolyzed, thus driving DNA branch migration. The RuvB motors rotate together with the DNA substrate, which together with the progressing nucleotide cycle form the mechanistic basis for DNA recombination by continuous HJ branch migration. Branch migration allows RuvC to scan DNA until it finds its consensus sequence, where it cleaves and resolves cruciform DNA. This chain is Holliday junction branch migration complex subunit RuvB, found in Staphylococcus saprophyticus subsp. saprophyticus (strain ATCC 15305 / DSM 20229 / NCIMB 8711 / NCTC 7292 / S-41).